The sequence spans 550 residues: Arginine--tRNA ligase (550 aa).

A 'HIGH' region motif is present at residues alanine 125–histidine 135.

This sequence belongs to the class-I aminoacyl-tRNA synthetase family. In terms of assembly, monomer.

It is found in the cytoplasm. The catalysed reaction is tRNA(Arg) + L-arginine + ATP = L-arginyl-tRNA(Arg) + AMP + diphosphate. This chain is Arginine--tRNA ligase, found in Lawsonia intracellularis (strain PHE/MN1-00).